A 296-amino-acid chain; its full sequence is Probable xyloglucan endotransglucosylase/hydrolase 1 (296 aa).

The N-terminal stretch at 1–22 (MGIIKGVLFSIVLINLSLVVFC) is a signal peptide. The GH16 domain maps to 23-221 (GYPRRPVDVP…WANAPFTASY (199 aa)). The Nucleophile role is filled by glutamate 107. The active-site Proton donor is glutamate 111. A xyloglucan-binding site is contributed by glutamate 111. Asparagine 115 carries N-linked (GlcNAc...) asparagine glycosylation. Xyloglucan is bound by residues 124–126 (QTN), 134–136 (NRE), 200–201 (DW), and glycine 205. Intrachain disulfides connect cysteine 229–cysteine 240 and cysteine 277–cysteine 290. A xyloglucan-binding site is contributed by arginine 282.

Belongs to the glycosyl hydrolase 16 family. XTH group 1 subfamily. In terms of processing, contains at least one intrachain disulfide bond essential for its enzymatic activity.

Its subcellular location is the secreted. The protein localises to the cell wall. The protein resides in the extracellular space. It localises to the apoplast. The enzyme catalyses breaks a beta-(1-&gt;4) bond in the backbone of a xyloglucan and transfers the xyloglucanyl segment on to O-4 of the non-reducing terminal glucose residue of an acceptor, which can be a xyloglucan or an oligosaccharide of xyloglucan.. Functionally, catalyzes xyloglucan endohydrolysis (XEH) and/or endotransglycosylation (XET). Cleaves and religates xyloglucan polymers, an essential constituent of the primary cell wall, and thereby participates in cell wall construction of growing tissues. This Solanum lycopersicum (Tomato) protein is Probable xyloglucan endotransglucosylase/hydrolase 1 (XTH1).